We begin with the raw amino-acid sequence, 319 residues long: Fructokinase (319 aa).

The protein belongs to the carbohydrate kinase PfkB family. Expressed in swelling stolons and, at higher levels, in developing tubers. Low levels found in leaves and stems from tuberizing plants.

It carries out the reaction D-fructose + ATP = D-fructose 6-phosphate + ADP + H(+). The protein operates within glycan biosynthesis; starch biosynthesis. Its function is as follows. May play an important role in maintaining the flux of carbon towards starch formation. This chain is Fructokinase, found in Solanum tuberosum (Potato).